Reading from the N-terminus, the 445-residue chain is tRNA-2-methylthio-N(6)-dimethylallyladenosine synthase (445 aa).

One can recognise an MTTase N-terminal domain in the interval 3–124 (KKLYIKTYGC…LPELISKVVR (122 aa)). Residues C12, C48, C87, C162, C166, and C169 each contribute to the [4Fe-4S] cluster site. In terms of domain architecture, Radical SAM core spans 148-380 (YPQGASSFIS…QQELATQQLA (233 aa)). Residues 383–445 (QSCVGSTMRV…ALNSLTGEIL (63 aa)) form the TRAM domain.

This sequence belongs to the methylthiotransferase family. MiaB subfamily. As to quaternary structure, monomer. The cofactor is [4Fe-4S] cluster.

Its subcellular location is the cytoplasm. It carries out the reaction N(6)-dimethylallyladenosine(37) in tRNA + (sulfur carrier)-SH + AH2 + 2 S-adenosyl-L-methionine = 2-methylsulfanyl-N(6)-dimethylallyladenosine(37) in tRNA + (sulfur carrier)-H + 5'-deoxyadenosine + L-methionine + A + S-adenosyl-L-homocysteine + 2 H(+). Functionally, catalyzes the methylthiolation of N6-(dimethylallyl)adenosine (i(6)A), leading to the formation of 2-methylthio-N6-(dimethylallyl)adenosine (ms(2)i(6)A) at position 37 in tRNAs that read codons beginning with uridine. The polypeptide is tRNA-2-methylthio-N(6)-dimethylallyladenosine synthase (Rickettsia prowazekii (strain Madrid E)).